The chain runs to 242 residues: ATP synthase subunit b 2 (242 aa).

A helical transmembrane segment spans residues 4–24; the sequence is LLAISSLTLLASLVLLVVSPA. Residues 43–74 are disordered; the sequence is ADSEDGDHDHDHEGDDHGHDEAAGDEHGHGDG. Residues 49 to 74 are compositionally biased toward basic and acidic residues; it reads DHDHDHEGDDHGHDEAAGDEHGHGDG.

It belongs to the ATPase B chain family. F-type ATPases have 2 components, F(1) - the catalytic core - and F(0) - the membrane proton channel. F(1) has five subunits: alpha(3), beta(3), gamma(1), delta(1), epsilon(1). F(0) has three main subunits: a(1), b(2) and c(10-14). The alpha and beta chains form an alternating ring which encloses part of the gamma chain. F(1) is attached to F(0) by a central stalk formed by the gamma and epsilon chains, while a peripheral stalk is formed by the delta and b chains.

The protein localises to the cell inner membrane. Its function is as follows. F(1)F(0) ATP synthase produces ATP from ADP in the presence of a proton or sodium gradient. F-type ATPases consist of two structural domains, F(1) containing the extramembraneous catalytic core and F(0) containing the membrane proton channel, linked together by a central stalk and a peripheral stalk. During catalysis, ATP synthesis in the catalytic domain of F(1) is coupled via a rotary mechanism of the central stalk subunits to proton translocation. In terms of biological role, component of the F(0) channel, it forms part of the peripheral stalk, linking F(1) to F(0). This chain is ATP synthase subunit b 2, found in Rhodopirellula baltica (strain DSM 10527 / NCIMB 13988 / SH1).